Consider the following 642-residue polypeptide: 1,4-alpha-glucan branching enzyme GlgB (642 aa).

Asp304 (nucleophile) is an active-site residue. Glu355 functions as the Proton donor in the catalytic mechanism.

The protein belongs to the glycosyl hydrolase 13 family. GlgB subfamily. Monomer.

It carries out the reaction Transfers a segment of a (1-&gt;4)-alpha-D-glucan chain to a primary hydroxy group in a similar glucan chain.. Its pathway is glycan biosynthesis; glycogen biosynthesis. Its function is as follows. Catalyzes the formation of the alpha-1,6-glucosidic linkages in glycogen by scission of a 1,4-alpha-linked oligosaccharide from growing alpha-1,4-glucan chains and the subsequent attachment of the oligosaccharide to the alpha-1,6 position. The protein is 1,4-alpha-glucan branching enzyme GlgB of Streptococcus pneumoniae serotype 4 (strain ATCC BAA-334 / TIGR4).